The following is a 273-amino-acid chain: 4-hydroxy-tetrahydrodipicolinate reductase (273 aa).

NAD(+) contacts are provided by residues 12–17 (GAGGRM) and Glu-38. An NADP(+)-binding site is contributed by Arg-39. NAD(+) is bound by residues 102–104 (GTT) and 126–129 (AANF). His-159 serves as the catalytic Proton donor/acceptor. Residue His-160 participates in (S)-2,3,4,5-tetrahydrodipicolinate binding. Lys-163 serves as the catalytic Proton donor. 169-170 (GT) is a (S)-2,3,4,5-tetrahydrodipicolinate binding site.

Belongs to the DapB family. As to quaternary structure, homotetramer.

The protein localises to the cytoplasm. It catalyses the reaction (S)-2,3,4,5-tetrahydrodipicolinate + NAD(+) + H2O = (2S,4S)-4-hydroxy-2,3,4,5-tetrahydrodipicolinate + NADH + H(+). The catalysed reaction is (S)-2,3,4,5-tetrahydrodipicolinate + NADP(+) + H2O = (2S,4S)-4-hydroxy-2,3,4,5-tetrahydrodipicolinate + NADPH + H(+). It functions in the pathway amino-acid biosynthesis; L-lysine biosynthesis via DAP pathway; (S)-tetrahydrodipicolinate from L-aspartate: step 4/4. In terms of biological role, catalyzes the conversion of 4-hydroxy-tetrahydrodipicolinate (HTPA) to tetrahydrodipicolinate. This Shigella boydii serotype 4 (strain Sb227) protein is 4-hydroxy-tetrahydrodipicolinate reductase.